The chain runs to 436 residues: 3-ketoacyl-CoA thiolase (436 aa).

Cysteine 99 (acyl-thioester intermediate) is an active-site residue. Residues histidine 392 and cysteine 422 each act as proton acceptor in the active site.

Belongs to the thiolase-like superfamily. Thiolase family. As to quaternary structure, heterotetramer of two alpha chains (FadJ) and two beta chains (FadI).

The protein localises to the cytoplasm. The catalysed reaction is an acyl-CoA + acetyl-CoA = a 3-oxoacyl-CoA + CoA. It functions in the pathway lipid metabolism; fatty acid beta-oxidation. In terms of biological role, catalyzes the final step of fatty acid oxidation in which acetyl-CoA is released and the CoA ester of a fatty acid two carbons shorter is formed. The sequence is that of 3-ketoacyl-CoA thiolase from Photobacterium profundum (strain SS9).